The sequence spans 632 residues: Lipoma-preferred partner homolog (632 aa).

Disordered regions lie at residues 1-118 (MSHP…RSSL) and 135-249 (SSPY…RSYN). Residues 26–40 (THSFGTPSISVSTQQ) show a composition bias toward polar residues. The span at 41-53 (PPKKFAPVVAPKP) shows a compositional bias: low complexity. Residue lysine 109 is modified to N6-acetyllysine. Residues serine 117 and serine 152 each carry the phosphoserine modification. Residues 144-160 (PGSSSSIASPPVSTPVT) are compositionally biased toward low complexity. Polar residues-rich tracts occupy residues 172–182 (PLTATKKSATK) and 206–239 (SYSTASTSSRPAFNVQVKSAQPSTHYMTGSSSGQ). Tyrosine 241 is modified (phosphotyrosine). Arginine 246 bears the Omega-N-methylarginine mark. A Glycyl lysine isopeptide (Lys-Gly) (interchain with G-Cter in SUMO1) cross-link involves residue lysine 324. 3 LIM zinc-binding domains span residues 434–493 (GRCA…INTL), 494–554 (EQCS…KFAP), and 555–623 (RCSV…RIRV).

This sequence belongs to the zyxin/ajuba family. In terms of assembly, interacts with PDZ domains of SCRIB, with VASP and with ACTN1/alpha-actinin.

The protein localises to the nucleus. It localises to the cytoplasm. Its subcellular location is the cell junction. Functionally, may play a structural role at sites of cell adhesion in maintaining cell shape and motility. In addition to these structural functions, it may also be implicated in signaling events and activation of gene transcription. May be involved in signal transduction from cell adhesion sites to the nucleus allowing successful integration of signals arising from soluble factors and cell-cell adhesion. Also suggested to serve as a scaffold protein upon which distinct protein complexes are assembled in the cytoplasm and in the nucleus. The chain is Lipoma-preferred partner homolog (Lpp) from Rattus norvegicus (Rat).